Consider the following 878-residue polypeptide: Alanine--tRNA ligase (878 aa).

Zn(2+)-binding residues include H558, H562, C663, and H667.

This sequence belongs to the class-II aminoacyl-tRNA synthetase family. Requires Zn(2+) as cofactor.

The protein localises to the cytoplasm. It carries out the reaction tRNA(Ala) + L-alanine + ATP = L-alanyl-tRNA(Ala) + AMP + diphosphate. Its function is as follows. Catalyzes the attachment of alanine to tRNA(Ala) in a two-step reaction: alanine is first activated by ATP to form Ala-AMP and then transferred to the acceptor end of tRNA(Ala). Also edits incorrectly charged Ser-tRNA(Ala) and Gly-tRNA(Ala) via its editing domain. The polypeptide is Alanine--tRNA ligase (Mycoplasmopsis synoviae (strain 53) (Mycoplasma synoviae)).